The primary structure comprises 238 residues: Triggering receptor expressed on myeloid cells 1 (238 aa).

The first 20 residues, 1–20 (MRSARLGRLLWMLFITEIQA), serve as a signal peptide directing secretion. Residues 21 to 129 (ATELPEEKYI…KDPIILFYPV (109 aa)) enclose the Ig-like V-type domain. The Extracellular segment spans residues 21 to 210 (ATELPEEKYI…DITRDTEISL (190 aa)). The cysteines at positions 41 and 113 are disulfide-linked. Asn135 is a glycosylation site (N-linked (GlcNAc...) asparagine). The segment at 141–169 (PASAETPTQSCSPTTTLPPTTTTNRHRPR) is disordered. The segment covering 146 to 163 (TPTQSCSPTTTLPPTTTT) has biased composition (low complexity). A glycan (N-linked (GlcNAc...) asparagine) is linked at Asn198. A helical membrane pass occupies residues 211–231 (ILPAVCGLLSKSLVFIVLFVV). Residues 232–238 (TRMSFTP) are Cytoplasmic-facing.

As to quaternary structure, monomer. Homomultimer; when activated. Interacts with TYROBP/DAP12. Interacts with TLR4.

It is found in the cell membrane. Functionally, cell surface receptor that plays important roles in innate and adaptive immunity by amplifying inflammatory responses. Upon activation by various ligands such as PGLYRP1, HMGB1 or HSP70, multimerizes and forms a complex with transmembrane adapter TYROBP/DAP12. In turn, initiates a SYK-mediated cascade of tyrosine phosphorylation, activating multiple downstream mediators such as BTK, MAPK1, MAPK3 or phospholipase C-gamma. This cascade promotes the neutrophil- and macrophage-mediated release of pro-inflammatory cytokines and/or chemokines, as well as their migration and thereby amplifies inflammatory responses that are triggered by bacterial and fungal infections. By also promoting the amplification of inflammatory signals that are initially triggered by Toll-like receptor (TLR) and NOD-like receptor engagement, plays a major role in the pathophysiology of acute and chronic inflammatory diseases of different etiologies including septic shock and atherosclerosis. This is Triggering receptor expressed on myeloid cells 1 (TREM1) from Sus scrofa (Pig).